Consider the following 493-residue polypeptide: Ectonucleoside triphosphate diphosphohydrolase 8 (493 aa).

Residues 1 to 7 (MEYKGKV) are Cytoplasmic-facing. A helical membrane pass occupies residues 8-28 (VAGLLTATCVFSIIALILSAV). Topologically, residues 29–463 (DVKDVFLPPG…ALEHVKGHEP (435 aa)) are extracellular. Residues Asn65, Asn79, and Asn133 are each glycosylated (N-linked (GlcNAc...) asparagine). A disulfide bridge links Cys76 with Cys100. The active-site Proton acceptor is Glu166. 9 N-linked (GlcNAc...) asparagine glycosylation sites follow: Asn223, Asn234, Asn267, Asn324, Asn330, Asn361, Asn372, Asn382, and Asn445. The cysteines at positions 244 and 291 are disulfide-linked. Cys327 and Cys333 are joined by a disulfide. An intrachain disulfide couples Cys379 to Cys401. Residues 464–486 (SLWAGAISFIVLAIVAGLVAILL) traverse the membrane as a helical segment. Residues 487–493 (QCFWKSK) lie on the Cytoplasmic side of the membrane.

It belongs to the GDA1/CD39 NTPase family. Requires Ca(2+) as cofactor. Mg(2+) serves as cofactor. N-glycosylated.

It localises to the cell membrane. It catalyses the reaction a ribonucleoside 5'-triphosphate + 2 H2O = a ribonucleoside 5'-phosphate + 2 phosphate + 2 H(+). Functionally, canalicular ectonucleoside NTPDase responsible for the main hepatic NTPDase activity. Ectonucleoside ATPases catalyze the hydrolysis of gamma- and beta-phosphate residues of nucleotides, playing a central role in concentration of extracellular nucleotides. This chain is Ectonucleoside triphosphate diphosphohydrolase 8 (ENTPD8), found in Gallus gallus (Chicken).